A 174-amino-acid chain; its full sequence is MNYFELFSLLPSYDVDTALLADRYRELQRAVHPDKFANASEQDKRLSVQRTAQINDAFQTLKNPIQRAEHLLALKGLELSHESTTLKDTQFLMQQMDWRESLEEIKHSDDPDSEIAELYDSFEQYAKHITAELKLLLVSELEADHLQAADQIRKLKFMAKLQDELTRVEDALLD.

The J domain occupies 2–74 (NYFELFSLLP…IQRAEHLLAL (73 aa)).

This sequence belongs to the HscB family. As to quaternary structure, interacts with HscA and stimulates its ATPase activity.

Functionally, co-chaperone involved in the maturation of iron-sulfur cluster-containing proteins. Seems to help targeting proteins to be folded toward HscA. The sequence is that of Co-chaperone protein HscB homolog from Shewanella pealeana (strain ATCC 700345 / ANG-SQ1).